Here is a 338-residue protein sequence, read N- to C-terminus: DNA-directed RNA polymerase subunit alpha (338 aa).

The tract at residues 1–234 (MIHKNWAELI…DQLSIFVNFE (234 aa)) is alpha N-terminal domain (alpha-NTD). The interval 250–338 (FNPLLLKKVD…DLAKRFEDQF (89 aa)) is alpha C-terminal domain (alpha-CTD).

It belongs to the RNA polymerase alpha chain family. In terms of assembly, homodimer. The RNAP catalytic core consists of 2 alpha, 1 beta, 1 beta' and 1 omega subunit. When a sigma factor is associated with the core the holoenzyme is formed, which can initiate transcription.

The catalysed reaction is RNA(n) + a ribonucleoside 5'-triphosphate = RNA(n+1) + diphosphate. Functionally, DNA-dependent RNA polymerase catalyzes the transcription of DNA into RNA using the four ribonucleoside triphosphates as substrates. In Cereibacter sphaeroides (strain ATCC 17029 / ATH 2.4.9) (Rhodobacter sphaeroides), this protein is DNA-directed RNA polymerase subunit alpha.